The primary structure comprises 331 residues: Endo-1,4-beta-xylanase 2 (331 aa).

The signal sequence occupies residues 1–17 (MKASSVLLGLAPLAALA). Positions 31-329 (QQSIDALMKA…KPAYNSVVQA (299 aa)) constitute a GH10 domain. N-linked (GlcNAc...) asparagine glycosylation occurs at asparagine 105. Glutamate 159 (proton donor) is an active-site residue. Glutamate 266 (nucleophile) is an active-site residue. Cysteine 284 and cysteine 290 are disulfide-bonded. A glycan (N-linked (GlcNAc...) asparagine) is linked at asparagine 301.

The protein belongs to the glycosyl hydrolase 10 (cellulase F) family.

It localises to the secreted. The catalysed reaction is Endohydrolysis of (1-&gt;4)-beta-D-xylosidic linkages in xylans.. The protein operates within glycan degradation; xylan degradation. Its function is as follows. Endo-1,4-beta-xylanase involved in the hydrolysis of xylan, a major structural heterogeneous polysaccharide found in plant biomass representing the second most abundant polysaccharide in the biosphere, after cellulose. Accounts for approximately 70 percent of the endoxylanase activity in the culture filtrate. The protein is Endo-1,4-beta-xylanase 2 (XYL2) of Pyricularia grisea (Crabgrass-specific blast fungus).